The sequence spans 568 residues: 2-succinyl-5-enolpyruvyl-6-hydroxy-3-cyclohexene-1-carboxylate synthase (568 aa).

The protein belongs to the TPP enzyme family. MenD subfamily. Homodimer. Mg(2+) serves as cofactor. It depends on Mn(2+) as a cofactor. Thiamine diphosphate is required as a cofactor.

It catalyses the reaction isochorismate + 2-oxoglutarate + H(+) = 5-enolpyruvoyl-6-hydroxy-2-succinyl-cyclohex-3-ene-1-carboxylate + CO2. Its pathway is quinol/quinone metabolism; 1,4-dihydroxy-2-naphthoate biosynthesis; 1,4-dihydroxy-2-naphthoate from chorismate: step 2/7. The protein operates within quinol/quinone metabolism; menaquinone biosynthesis. Its function is as follows. Catalyzes the thiamine diphosphate-dependent decarboxylation of 2-oxoglutarate and the subsequent addition of the resulting succinic semialdehyde-thiamine pyrophosphate anion to isochorismate to yield 2-succinyl-5-enolpyruvyl-6-hydroxy-3-cyclohexene-1-carboxylate (SEPHCHC). In Actinobacillus pleuropneumoniae serotype 3 (strain JL03), this protein is 2-succinyl-5-enolpyruvyl-6-hydroxy-3-cyclohexene-1-carboxylate synthase.